A 500-amino-acid chain; its full sequence is L-arabinose isomerase (500 aa).

Mn(2+)-binding residues include Glu306, Glu333, His350, and His450.

This sequence belongs to the arabinose isomerase family. As to quaternary structure, homohexamer. Requires Mn(2+) as cofactor.

The catalysed reaction is beta-L-arabinopyranose = L-ribulose. It functions in the pathway carbohydrate degradation; L-arabinose degradation via L-ribulose; D-xylulose 5-phosphate from L-arabinose (bacterial route): step 1/3. Its function is as follows. Catalyzes the conversion of L-arabinose to L-ribulose. This chain is L-arabinose isomerase, found in Klebsiella pneumoniae (strain 342).